A 230-amino-acid chain; its full sequence is Potassium/proton antiporter CemA (230 aa).

Helical transmembrane passes span Leu-7 to Phe-27, Ile-107 to Gly-127, Leu-145 to His-165, and Phe-181 to Leu-201.

It belongs to the CemA family.

The protein localises to the plastid. It localises to the chloroplast inner membrane. The catalysed reaction is K(+)(in) + H(+)(out) = K(+)(out) + H(+)(in). Functionally, contributes to K(+)/H(+) antiport activity by supporting proton efflux to control proton extrusion and homeostasis in chloroplasts in a light-dependent manner to modulate photosynthesis. Prevents excessive induction of non-photochemical quenching (NPQ) under continuous-light conditions. Indirectly promotes efficient inorganic carbon uptake into chloroplasts. The sequence is that of Potassium/proton antiporter CemA from Triticum aestivum (Wheat).